Here is a 411-residue protein sequence, read N- to C-terminus: MKKFKIRKLMARVLALALVFSTFFMVSKVDANAASYNLMETYGAKYGYSGNCVHTHMLRDSRIVNAIKKDSNIVTLGNEMKPDYLLGSRQATLISVDEAKRLGYYIPSNYKERYVPKIDFRTVDEAVKICYENGLKMRGHTLVWHSQTPTWLFRENYSGNGRFVNTATMDARLEFYVKSVMGHFYSGKYGSTLVYWDVCNETLHAQNSGWEAVYGSNKTNAVYVKKAFNYAYQVLEQYKLTNSVKLFYNDYNTYMEVNDVIKLVNYINQGKKVCAGVGMQSHLGTGFPSVDYYTNALNSFLRAGFEVQITELDITNKGDYDLNNYAYRLFKNINAAKKNGGNISCITWWGPSDAETWIRNEKPLIWSNIGVAKPAYDEVVKAFTETFGNPGSFTPQPTITPQPTPTPSGQT.

A signal peptide spans 1–33; the sequence is MKKFKIRKLMARVLALALVFSTFFMVSKVDANA. Residues 34 to 382 enclose the GH10 domain; it reads ASYNLMETYG…KPAYDEVVKA (349 aa). The active-site Proton donor is the Glu-201. Catalysis depends on Glu-311, which acts as the Nucleophile. The tract at residues 387-411 is disordered; the sequence is FGNPGSFTPQPTITPQPTPTPSGQT. Over residues 398 to 411 the composition is skewed to pro residues; sequence TITPQPTPTPSGQT.

It belongs to the glycosyl hydrolase 10 (cellulase F) family.

It carries out the reaction Endohydrolysis of (1-&gt;4)-beta-D-xylosidic linkages in xylans.. It participates in glycan degradation; xylan degradation. B.fibrisolvens is located in the rumen of ruminant animals, where it contributes to the animal's digestion of plant material by hydrolyzing hemicellulose with its xylanases. This Butyrivibrio fibrisolvens protein is Endo-1,4-beta-xylanase A (xynA).